The chain runs to 179 residues: Transcription factor 21 (179 aa).

A disordered region spans residues 20-87 (CDGLKMDSNK…QVQRNAANAR (68 aa)). Over residues 33 to 46 (TSNESTEESSNCEN) the composition is skewed to low complexity. Polar residues predominate over residues 70-80 (SGVSQEGKQVQ). A bHLH domain is found at 79 to 131 (VQRNAANARERARMRVLSKAFSRLKTTLPWVPPDTKLSKLDTLRLASSYIAHL).

As to quaternary structure, efficient DNA binding requires dimerization with another bHLH protein. Forms a heterodimer with TCF3 and binds the E box (5'-CANNTG-3').

It localises to the nucleus. Involved in epithelial-mesenchymal interactions in kidney and lung morphogenesis that include epithelial differentiation and branching morphogenesis. May play a role in the specification or differentiation of one or more subsets of epicardial cell types. This is Transcription factor 21 (TCF21) from Homo sapiens (Human).